The following is a 364-amino-acid chain: tRNA-specific 2-thiouridylase MnmA 1 (364 aa).

Residues 11 to 18 (GMSGGTDS) and phenylalanine 37 contribute to the ATP site. Cysteine 96 acts as the Nucleophile in catalysis. A disulfide bridge links cysteine 96 with cysteine 193. Glycine 120 is a binding site for ATP. Residues 142–144 (KDQ) form an interaction with tRNA region. The active-site Cysteine persulfide intermediate is cysteine 193. Residues 309-310 (RY) form an interaction with tRNA region.

Belongs to the MnmA/TRMU family.

The protein resides in the cytoplasm. It catalyses the reaction S-sulfanyl-L-cysteinyl-[protein] + uridine(34) in tRNA + AH2 + ATP = 2-thiouridine(34) in tRNA + L-cysteinyl-[protein] + A + AMP + diphosphate + H(+). Catalyzes the 2-thiolation of uridine at the wobble position (U34) of tRNA, leading to the formation of s(2)U34. In Bacteroides fragilis (strain YCH46), this protein is tRNA-specific 2-thiouridylase MnmA 1.